The sequence spans 368 residues: Seven-bladed beta-propeller protein MSMEG_5308 (368 aa).

Interacts with MmpL3 and TtfA.

It is found in the cell septum. The protein localises to the cell tip. In terms of biological role, stabilizes the MmpL3/TtfA trehalose monomycolate (TMM) transport complex under stress conditions. This is Seven-bladed beta-propeller protein MSMEG_5308 from Mycolicibacterium smegmatis (strain ATCC 700084 / mc(2)155) (Mycobacterium smegmatis).